Reading from the N-terminus, the 80-residue chain is Exodeoxyribonuclease 7 small subunit (80 aa).

It belongs to the XseB family. As to quaternary structure, heterooligomer composed of large and small subunits.

It is found in the cytoplasm. It catalyses the reaction Exonucleolytic cleavage in either 5'- to 3'- or 3'- to 5'-direction to yield nucleoside 5'-phosphates.. Functionally, bidirectionally degrades single-stranded DNA into large acid-insoluble oligonucleotides, which are then degraded further into small acid-soluble oligonucleotides. The chain is Exodeoxyribonuclease 7 small subunit from Photobacterium profundum (strain SS9).